Consider the following 200-residue polypeptide: Large ribosomal subunit protein uL4 (200 aa).

The segment at 38–68 is disordered; it reads GRQGSKQQKTRSDVRGGGKRPWRQKGTGRAR. Over residues 54 to 65 the composition is skewed to basic residues; the sequence is GGKRPWRQKGTG.

It belongs to the universal ribosomal protein uL4 family. Part of the 50S ribosomal subunit.

Its function is as follows. One of the primary rRNA binding proteins, this protein initially binds near the 5'-end of the 23S rRNA. It is important during the early stages of 50S assembly. It makes multiple contacts with different domains of the 23S rRNA in the assembled 50S subunit and ribosome. Functionally, forms part of the polypeptide exit tunnel. This chain is Large ribosomal subunit protein uL4, found in Pseudomonas fluorescens (strain Pf0-1).